The following is a 159-amino-acid chain: MSITGQPHVYKKDTIIRLKPLSLNSNNRSYVFSSSKGNIQNIINHLNNLNEIVGRSLLGIWRINSYFGLSKDPSESKSKNPSVFNTAKTIFKSGGVDYSSQLKEIKSLLEAQNTRIKNLENAIQSLDNKIQPEPLTKEEVKELKESINSIKEALKNIIG.

The protein belongs to the caulimoviridae ORF II family.

This protein is involved in virus transmission. In Cauliflower mosaic virus (strain PV147) (CaMV), this protein is Aphid transmission protein.